Here is a 287-residue protein sequence, read N- to C-terminus: Nucleotide-binding protein MXAN_6564 (287 aa).

ATP is bound at residue 13-20 (GMSGSGKS). 62–65 (DVRE) contacts GTP.

This sequence belongs to the RapZ-like family.

Functionally, displays ATPase and GTPase activities. This chain is Nucleotide-binding protein MXAN_6564, found in Myxococcus xanthus (strain DK1622).